The chain runs to 551 residues: Glucose-6-phosphate isomerase 2 (551 aa).

Glutamate 353 functions as the Proton donor in the catalytic mechanism. Residues histidine 384 and lysine 512 contribute to the active site.

It belongs to the GPI family.

It is found in the cytoplasm. It carries out the reaction alpha-D-glucose 6-phosphate = beta-D-fructose 6-phosphate. Its pathway is carbohydrate biosynthesis; gluconeogenesis. It participates in carbohydrate degradation; glycolysis; D-glyceraldehyde 3-phosphate and glycerone phosphate from D-glucose: step 2/4. Functionally, catalyzes the reversible isomerization of glucose-6-phosphate to fructose-6-phosphate. This Colwellia psychrerythraea (strain 34H / ATCC BAA-681) (Vibrio psychroerythus) protein is Glucose-6-phosphate isomerase 2.